Consider the following 299-residue polypeptide: Tetrahydromethanopterin S-methyltransferase subunit E (299 aa).

The next 6 membrane-spanning stretches (helical) occupy residues 57 to 77, 80 to 100, 133 to 153, 158 to 178, 226 to 246, and 262 to 282; these read AISGEPVSYGLYVAVAGTIAW, INAGLNAVLAIIVGSGVAAIV, IGPIVGHGFIAVFTMTLAAYL, LGNPFPLPLVALIFGITVGAI, YFCSRFGGPLTGLCFGLIIFL, and VTKTSIALLVGLLVVAVAAVI.

It belongs to the MtrE family. In terms of assembly, the complex is composed of 8 subunits; MtrA, MtrB, MtrC, MtrD, MtrE, MtrF, MtrG and MtrH.

Its subcellular location is the cell membrane. The enzyme catalyses 5-methyl-5,6,7,8-tetrahydromethanopterin + coenzyme M + 2 Na(+)(in) = 5,6,7,8-tetrahydromethanopterin + methyl-coenzyme M + 2 Na(+)(out). It participates in one-carbon metabolism; methanogenesis from CO(2); methyl-coenzyme M from 5,10-methylene-5,6,7,8-tetrahydromethanopterin: step 2/2. In terms of biological role, part of a complex that catalyzes the formation of methyl-coenzyme M and tetrahydromethanopterin from coenzyme M and methyl-tetrahydromethanopterin. This is an energy-conserving, sodium-ion translocating step. The sequence is that of Tetrahydromethanopterin S-methyltransferase subunit E from Methanococcus maripaludis (strain C7 / ATCC BAA-1331).